The primary structure comprises 345 residues: Uroporphyrinogen decarboxylase (345 aa).

Residues 27–31 (RQAGR), phenylalanine 46, aspartate 76, tyrosine 152, serine 207, and histidine 320 contribute to the substrate site.

This sequence belongs to the uroporphyrinogen decarboxylase family. As to quaternary structure, homodimer.

Its subcellular location is the cytoplasm. It catalyses the reaction uroporphyrinogen III + 4 H(+) = coproporphyrinogen III + 4 CO2. It functions in the pathway porphyrin-containing compound metabolism; protoporphyrin-IX biosynthesis; coproporphyrinogen-III from 5-aminolevulinate: step 4/4. Its function is as follows. Catalyzes the decarboxylation of four acetate groups of uroporphyrinogen-III to yield coproporphyrinogen-III. In Geobacillus sp. (strain WCH70), this protein is Uroporphyrinogen decarboxylase.